Reading from the N-terminus, the 171-residue chain is Ribosome maturation factor RimM (171 aa).

The 74-residue stretch at 97–170 folds into the PRC barrel domain; it reads EGEYYYHEII…LVTIHVMEGL (74 aa).

This sequence belongs to the RimM family. Binds ribosomal protein uS19.

The protein resides in the cytoplasm. Functionally, an accessory protein needed during the final step in the assembly of 30S ribosomal subunit, possibly for assembly of the head region. Essential for efficient processing of 16S rRNA. May be needed both before and after RbfA during the maturation of 16S rRNA. It has affinity for free ribosomal 30S subunits but not for 70S ribosomes. This Bacillus cereus (strain ATCC 14579 / DSM 31 / CCUG 7414 / JCM 2152 / NBRC 15305 / NCIMB 9373 / NCTC 2599 / NRRL B-3711) protein is Ribosome maturation factor RimM.